Here is a 357-residue protein sequence, read N- to C-terminus: Ribosomal RNA large subunit methyltransferase M (357 aa).

Residues serine 183, 216–219 (APGG), aspartate 235, aspartate 255, and aspartate 271 contribute to the S-adenosyl-L-methionine site. The Proton acceptor role is filled by lysine 300.

This sequence belongs to the class I-like SAM-binding methyltransferase superfamily. RNA methyltransferase RlmE family. RlmM subfamily. In terms of assembly, monomer.

It localises to the cytoplasm. It catalyses the reaction cytidine(2498) in 23S rRNA + S-adenosyl-L-methionine = 2'-O-methylcytidine(2498) in 23S rRNA + S-adenosyl-L-homocysteine + H(+). Its function is as follows. Catalyzes the 2'-O-methylation at nucleotide C2498 in 23S rRNA. The polypeptide is Ribosomal RNA large subunit methyltransferase M (Pseudomonas fluorescens (strain Pf0-1)).